A 120-amino-acid polypeptide reads, in one-letter code: uncharacterized protein (120 aa).

3 helical membrane passes run 20-39 (FFWP…CYLL), 52-71 (GSSL…LFSI), and 86-108 (ILVV…SIIG).

Its subcellular location is the cell membrane. This is an uncharacterized protein from Pasteurella multocida (strain Pm70).